Here is a 175-residue protein sequence, read N- to C-terminus: Protein SELF-PRUNING (175 aa).

The protein belongs to the phosphatidylethanolamine-binding protein family.

It localises to the cytoplasm. Functionally, not known. In plants homozygous for the recessive allele of the SP gene, sympodial segments develop progressively fewer nodes until the shoot is terminated by two consecutive. inflorescences. In Solanum lycopersicum (Tomato), this protein is Protein SELF-PRUNING (SP).